Consider the following 91-residue polypeptide: C-C motif chemokine 5 (91 aa).

An N-terminal signal peptide occupies residues 1–23 (MKVSATAFAVLLMAAALCAPASA). 2 disulfides stabilise this stretch: Cys-33–Cys-57 and Cys-34–Cys-73.

It belongs to the intercrine beta (chemokine CC) family.

The protein resides in the secreted. Functionally, chemoattractant for blood monocytes, memory T-helper cells and eosinophils. Causes the release of histamine from basophils and activates eosinophils. May activate several chemokine receptors including CCR1, CCR3, CCR4 and CCR5. May also be an agonist of the G protein-coupled receptor GPR75. Together with GPR75, may play a role in neuron survival through activation of a downstream signaling pathway involving the PI3, Akt and MAP kinases. By activating GPR75 may also play a role in insulin secretion by islet cells. This chain is C-C motif chemokine 5 (CCL5), found in Bos taurus (Bovine).